The sequence spans 129 residues: Ribulose bisphosphate carboxylase small subunit (129 aa).

Positions 109–129 (LRMTRTESNGRSQHYMWETQR) are disordered.

Belongs to the RuBisCO small chain family. As to quaternary structure, heterohexadecamer of 8 large and 8 small subunits.

In terms of biological role, ruBisCO catalyzes two reactions: the carboxylation of D-ribulose 1,5-bisphosphate, the primary event in carbon dioxide fixation, as well as the oxidative fragmentation of the pentose substrate. Both reactions occur simultaneously and in competition at the same active site. Although the small subunit is not catalytic it is essential for maximal activity. This chain is Ribulose bisphosphate carboxylase small subunit, found in Rhizobium meliloti (strain 1021) (Ensifer meliloti).